We begin with the raw amino-acid sequence, 195 residues long: Imidazoleglycerol-phosphate dehydratase (195 aa).

It belongs to the imidazoleglycerol-phosphate dehydratase family.

The protein resides in the cytoplasm. It carries out the reaction D-erythro-1-(imidazol-4-yl)glycerol 3-phosphate = 3-(imidazol-4-yl)-2-oxopropyl phosphate + H2O. The protein operates within amino-acid biosynthesis; L-histidine biosynthesis; L-histidine from 5-phospho-alpha-D-ribose 1-diphosphate: step 6/9. This chain is Imidazoleglycerol-phosphate dehydratase, found in Deinococcus deserti (strain DSM 17065 / CIP 109153 / LMG 22923 / VCD115).